We begin with the raw amino-acid sequence, 215 residues long: Pyridoxine/pyridoxamine 5'-phosphate oxidase (215 aa).

Substrate is bound by residues 9–12 and Lys-69; that span reads RRDY. Residues 64–69, 79–80, Lys-86, and Gln-108 each bind FMN; these read RVLLLK and FT. Substrate contacts are provided by Tyr-126, Arg-130, and Ser-134. Residues 143–144 and Trp-188 each bind FMN; that span reads QS. 194-196 serves as a coordination point for substrate; sequence RLH. Arg-198 is an FMN binding site.

It belongs to the pyridoxamine 5'-phosphate oxidase family. As to quaternary structure, homodimer. It depends on FMN as a cofactor.

It catalyses the reaction pyridoxamine 5'-phosphate + O2 + H2O = pyridoxal 5'-phosphate + H2O2 + NH4(+). The enzyme catalyses pyridoxine 5'-phosphate + O2 = pyridoxal 5'-phosphate + H2O2. Its pathway is cofactor metabolism; pyridoxal 5'-phosphate salvage; pyridoxal 5'-phosphate from pyridoxamine 5'-phosphate: step 1/1. The protein operates within cofactor metabolism; pyridoxal 5'-phosphate salvage; pyridoxal 5'-phosphate from pyridoxine 5'-phosphate: step 1/1. Its function is as follows. Catalyzes the oxidation of either pyridoxine 5'-phosphate (PNP) or pyridoxamine 5'-phosphate (PMP) into pyridoxal 5'-phosphate (PLP). The chain is Pyridoxine/pyridoxamine 5'-phosphate oxidase from Pseudomonas syringae pv. syringae (strain B728a).